The following is a 326-amino-acid chain: Acetyl-coenzyme A carboxylase carboxyl transferase subunit alpha (326 aa).

Residues 46–300 (EIEARAAELR…KEALLRHLDE (255 aa)) form the CoA carboxyltransferase C-terminal domain.

Belongs to the AccA family. As to quaternary structure, acetyl-CoA carboxylase is a heterohexamer composed of biotin carboxyl carrier protein (AccB), biotin carboxylase (AccC) and two subunits each of ACCase subunit alpha (AccA) and ACCase subunit beta (AccD).

The protein localises to the cytoplasm. It catalyses the reaction N(6)-carboxybiotinyl-L-lysyl-[protein] + acetyl-CoA = N(6)-biotinyl-L-lysyl-[protein] + malonyl-CoA. It functions in the pathway lipid metabolism; malonyl-CoA biosynthesis; malonyl-CoA from acetyl-CoA: step 1/1. Component of the acetyl coenzyme A carboxylase (ACC) complex. First, biotin carboxylase catalyzes the carboxylation of biotin on its carrier protein (BCCP) and then the CO(2) group is transferred by the carboxyltransferase to acetyl-CoA to form malonyl-CoA. This chain is Acetyl-coenzyme A carboxylase carboxyl transferase subunit alpha, found in Gloeobacter violaceus (strain ATCC 29082 / PCC 7421).